The following is a 202-amino-acid chain: UPF0301 protein BCG_0069 (202 aa).

Belongs to the UPF0301 (AlgH) family.

The polypeptide is UPF0301 protein BCG_0069 (Mycobacterium bovis (strain BCG / Pasteur 1173P2)).